Reading from the N-terminus, the 231-residue chain is NADH-ubiquinone oxidoreductase chain 4 (231 aa).

A run of 6 helical transmembrane segments spans residues 1 to 21, 34 to 54, 63 to 85, 89 to 111, 128 to 148, and 169 to 189; these read PIAG…YGII, MFLP…LTCL, IAYS…TPWG, AMAL…NTTY, ILPM…AIPP, and TIIM…HMFL.

The protein belongs to the complex I subunit 4 family.

The protein resides in the mitochondrion membrane. The enzyme catalyses a ubiquinone + NADH + 5 H(+)(in) = a ubiquinol + NAD(+) + 4 H(+)(out). In terms of biological role, core subunit of the mitochondrial membrane respiratory chain NADH dehydrogenase (Complex I) that is believed to belong to the minimal assembly required for catalysis. Complex I functions in the transfer of electrons from NADH to the respiratory chain. The immediate electron acceptor for the enzyme is believed to be ubiquinone. This chain is NADH-ubiquinone oxidoreductase chain 4 (MT-ND4), found in Deinagkistrodon acutus (Hundred-pace snake).